Consider the following 501-residue polypeptide: Flagellin (501 aa).

This sequence belongs to the bacterial flagellin family.

It localises to the secreted. The protein resides in the bacterial flagellum. Flagellin is the subunit protein which polymerizes to form the filaments of bacterial flagella. The chain is Flagellin (flaA) from Aquifex pyrophilus.